The sequence spans 950 residues: Coatomer subunit beta-2 (950 aa).

HEAT repeat units follow at residues 92–126, 127–164, 275–312, 313–350, and 392–429; these read PEMI…LSEP, EVLE…LPHG, TAVR…TSHR, DVMV…ARNV, and EVAG…TNPK.

As to quaternary structure, oligomeric complex that consists of at least the alpha, beta, beta', gamma, delta, epsilon and zeta subunits.

It is found in the cytoplasm. The protein resides in the golgi apparatus membrane. It localises to the cytoplasmic vesicle. The protein localises to the COPI-coated vesicle membrane. The coatomer is a cytosolic protein complex that binds to dilysine motifs and reversibly associates with Golgi non-clathrin-coated vesicles, which further mediate biosynthetic protein transport from the ER, via the Golgi up to the trans Golgi network. Coatomer complex is required for budding from Golgi membranes, and is essential for the retrograde Golgi-to-ER transport of dilysine-tagged proteins. The sequence is that of Coatomer subunit beta-2 from Oryza sativa subsp. japonica (Rice).